The sequence spans 206 residues: MLHLKEKLKGTTTVGLVCKEGVVLAADTRASLGNIIYAKNVTKIHKIDEHLAIAGAGDVGDILNLVRLLKAEANLYKSTVGKEMSVKALATLLANILNGSKYFPYLGWFLVGGYDEKPRLFSVDMVGGITEDNYAAAGSGMEFAYSILDSEYREEMSVNDGIKLAVKAINVAIKRDVFTGDGLLVVTITKDGYKEYRGAELEKMLK.

Positions 1-10 (MLHLKEKLKG) are cleaved as a propeptide — removed in mature form; by autocatalysis. The active-site Nucleophile is Thr-11.

Belongs to the peptidase T1B family. In terms of assembly, the 20S proteasome core is composed of 14 alpha and 14 beta subunits that assemble into four stacked heptameric rings, resulting in a barrel-shaped structure. The two inner rings, each composed of seven catalytic beta subunits, are sandwiched by two outer rings, each composed of seven alpha subunits. The catalytic chamber with the active sites is on the inside of the barrel. Has a gated structure, the ends of the cylinder being occluded by the N-termini of the alpha-subunits. Is capped at one or both ends by the proteasome regulatory ATPase, PAN.

Its subcellular location is the cytoplasm. It carries out the reaction Cleavage of peptide bonds with very broad specificity.. Its activity is regulated as follows. The formation of the proteasomal ATPase PAN-20S proteasome complex, via the docking of the C-termini of PAN into the intersubunit pockets in the alpha-rings, triggers opening of the gate for substrate entry. Interconversion between the open-gate and close-gate conformations leads to a dynamic regulation of the 20S proteasome proteolysis activity. Component of the proteasome core, a large protease complex with broad specificity involved in protein degradation. The protein is Proteasome subunit beta 2 of Pyrococcus furiosus (strain ATCC 43587 / DSM 3638 / JCM 8422 / Vc1).